The following is a 475-amino-acid chain: Ankyrin repeat, SAM and basic leucine zipper domain-containing protein 1 (475 aa).

The tract at residues 1 to 25 is disordered; the sequence is MAAGALRGLPVAGGGESSESEDDGW. Residues Ser17, Ser18, and Ser20 each carry the phosphoserine modification. ANK repeat units follow at residues 45–74, 78–107, 110–144, 148–177, 181–210, and 214–243; these read EKKE…SVDS, YGWT…NASF, DKQT…DPNV, RLMT…EVNT, NGYT…NKML, and DGKM…PLEG. Residues 272-334 enclose the SAM domain; the sequence is SYTAFGDLEV…KILAALKELQ (63 aa).

Interacts with DDX4, PIWIL1, RANBP9 and TDRD1.

The protein resides in the cytoplasm. In terms of biological role, plays a central role during spermatogenesis by repressing transposable elements and preventing their mobilization, which is essential for the germline integrity. Acts via the piRNA metabolic process, which mediates the repression of transposable elements during meiosis by forming complexes composed of piRNAs and Piwi proteins and governs the methylation and subsequent repression of transposons. Its association with pi-bodies suggests a participation in the primary piRNAs metabolic process. Required prior to the pachytene stage to facilitate the production of multiple types of piRNAs, including those associated with repeats involved in the regulation of retrotransposons. May act by mediating protein-protein interactions during germ cell maturation. This chain is Ankyrin repeat, SAM and basic leucine zipper domain-containing protein 1 (ASZ1), found in Chlorocebus aethiops (Green monkey).